Consider the following 811-residue polypeptide: Glycerol-3-phosphate acyltransferase (811 aa).

Positions 309–314 match the HXXXXD motif motif; the sequence is HRSHMD.

It belongs to the GPAT/DAPAT family.

It localises to the cell inner membrane. It carries out the reaction sn-glycerol 3-phosphate + an acyl-CoA = a 1-acyl-sn-glycero-3-phosphate + CoA. The protein operates within phospholipid metabolism; CDP-diacylglycerol biosynthesis; CDP-diacylglycerol from sn-glycerol 3-phosphate: step 1/3. This chain is Glycerol-3-phosphate acyltransferase (plsB), found in Vibrio cholerae serotype O1 (strain ATCC 39315 / El Tor Inaba N16961).